We begin with the raw amino-acid sequence, 328 residues long: Probable cell division protein WhiA (328 aa).

A DNA-binding region (H-T-H motif) is located at residues 275–308; the sequence is SLEELGQLASPPMTKDAVAGRIRRLLSMADKRAE.

The protein belongs to the WhiA family.

Its function is as follows. Involved in cell division and chromosome segregation. This chain is Probable cell division protein WhiA, found in Corynebacterium urealyticum (strain ATCC 43042 / DSM 7109).